The primary structure comprises 386 residues: Succinate--CoA ligase [ADP-forming] subunit beta (386 aa).

Residues 9 to 244 (KEILRSYGVS…LDEEDPKEVE (236 aa)) enclose the ATP-grasp domain. ATP-binding positions include K46, 53 to 55 (GRG), E99, C102, and E107. The Mg(2+) site is built by N199 and D213. Substrate contacts are provided by residues N264 and 321 to 323 (GIM).

It belongs to the succinate/malate CoA ligase beta subunit family. Heterotetramer of two alpha and two beta subunits. The cofactor is Mg(2+).

It catalyses the reaction succinate + ATP + CoA = succinyl-CoA + ADP + phosphate. It carries out the reaction GTP + succinate + CoA = succinyl-CoA + GDP + phosphate. Its pathway is carbohydrate metabolism; tricarboxylic acid cycle; succinate from succinyl-CoA (ligase route): step 1/1. Functionally, succinyl-CoA synthetase functions in the citric acid cycle (TCA), coupling the hydrolysis of succinyl-CoA to the synthesis of either ATP or GTP and thus represents the only step of substrate-level phosphorylation in the TCA. The beta subunit provides nucleotide specificity of the enzyme and binds the substrate succinate, while the binding sites for coenzyme A and phosphate are found in the alpha subunit. This is Succinate--CoA ligase [ADP-forming] subunit beta from Geobacillus kaustophilus (strain HTA426).